The sequence spans 103 residues: UPF0132 membrane protein AF_0105 (103 aa).

3 helical membrane-spanning segments follow: residues 5–25, 35–55, and 58–78; these read VAGA…LLME, AMQS…LSFI, and IGVL…LVCI.

It belongs to the UPF0132 family.

It is found in the cell membrane. The protein is UPF0132 membrane protein AF_0105 of Archaeoglobus fulgidus (strain ATCC 49558 / DSM 4304 / JCM 9628 / NBRC 100126 / VC-16).